The primary structure comprises 195 residues: Neurturin (195 aa).

Positions 1-19 (MRRWKAAALVSLICSSLLS) are cleaved as a signal peptide. Residues 20–95 (VWMCQEGLLL…RAGPRRRRAR (76 aa)) constitute a propeptide that is removed on maturation. 3 disulfide bridges follow: C101–C163, C128–C192, and C132–C194. Residues R147, R156, and R158 each contribute to the heparan sulfate group site.

The protein belongs to the TGF-beta family. GDNF subfamily. Homodimer; disulfide-linked. Interacts with GFRA2 coreceptor and RET: forms a 2:2:2 ternary complex composed of NRTN ligand, GFRA2 and RET receptor. Also forms a 4:4:4 tetrameric complex composed of 4 copies of NRTN ligand, GFRA2 and RET receptor, which prevents endocytosis of RET. Widespread distribution.

It is found in the secreted. Growth factor that supports the survival of sympathetic neurons in culture. May regulate the development and maintenance of the CNS. Involved in the development of the neural crest. Might control the size of non-neuronal cell population such as haemopoietic cells. Acts by binding to its coreceptor, GFRA2, leading to autophosphorylation and activation of the RET receptor. Heparan sulfate-binding is required for signaling. This Mus musculus (Mouse) protein is Neurturin (Nrtn).